A 71-amino-acid chain; its full sequence is Putative membrane protein insertion efficiency factor (71 aa).

This sequence belongs to the UPF0161 family.

The protein resides in the cell membrane. Functionally, could be involved in insertion of integral membrane proteins into the membrane. The sequence is that of Putative membrane protein insertion efficiency factor from Desulforudis audaxviator (strain MP104C).